The primary structure comprises 208 residues: Ribosomal RNA large subunit methyltransferase E (208 aa).

The S-adenosyl-L-methionine site is built by Gly-61, Trp-63, Asp-81, Asp-97, and Asp-122. Lys-162 (proton acceptor) is an active-site residue.

This sequence belongs to the class I-like SAM-binding methyltransferase superfamily. RNA methyltransferase RlmE family.

Its subcellular location is the cytoplasm. It carries out the reaction uridine(2552) in 23S rRNA + S-adenosyl-L-methionine = 2'-O-methyluridine(2552) in 23S rRNA + S-adenosyl-L-homocysteine + H(+). In terms of biological role, specifically methylates the uridine in position 2552 of 23S rRNA at the 2'-O position of the ribose in the fully assembled 50S ribosomal subunit. The chain is Ribosomal RNA large subunit methyltransferase E from Pseudomonas putida (strain GB-1).